Here is a 147-residue protein sequence, read N- to C-terminus: 3-dehydroquinate dehydratase (147 aa).

Tyr-25 functions as the Proton acceptor in the catalytic mechanism. Residues Asn-76, His-82, and Asp-89 each contribute to the substrate site. The active-site Proton donor is His-102. Residues 103-104 and Arg-113 contribute to the substrate site; that span reads IS.

It belongs to the type-II 3-dehydroquinase family. As to quaternary structure, homododecamer.

The catalysed reaction is 3-dehydroquinate = 3-dehydroshikimate + H2O. Its pathway is metabolic intermediate biosynthesis; chorismate biosynthesis; chorismate from D-erythrose 4-phosphate and phosphoenolpyruvate: step 3/7. In terms of biological role, catalyzes a trans-dehydration via an enolate intermediate. This chain is 3-dehydroquinate dehydratase, found in Mycobacterium tuberculosis (strain ATCC 25177 / H37Ra).